A 94-amino-acid polypeptide reads, in one-letter code: Small ubiquitin-related modifier 3 (94 aa).

Lys11 is covalently cross-linked (Glycyl lysine isopeptide (Lys-Gly) (interchain with G-Cter in SUMO)). In terms of domain architecture, Ubiquitin-like spans 15 to 92 (DHINLKVAGQ…IDVFQQQTGG (78 aa)). A Glycyl lysine isopeptide (Gly-Lys) (interchain with K-? in acceptor proteins) cross-link involves residue Gly92. Positions 93–94 (LC) are excised as a propeptide.

This sequence belongs to the ubiquitin family. SUMO subfamily. In terms of assembly, interacts with SAE2 and UBE2I. Covalently attached to a number of proteins. Post-translationally, polymeric chains can be formed through Lys-11 cross-linking. Cleavage of precursor form by a sentrin-specific protease is necessary for function.

The protein resides in the cytoplasm. It is found in the nucleus. The protein localises to the PML body. Functionally, ubiquitin-like protein which can be covalently attached to target lysines either as a monomer or as a lysine-linked polymer. Does not seem to be involved in protein degradation and may function as an antagonist of ubiquitin in the degradation process. Plays a role in a number of cellular processes such as nuclear transport, DNA replication and repair, mitosis and signal transduction. Covalent attachment to its substrates requires prior activation by the E1 complex SAE1-SAE2 and linkage to the E2 enzyme UBE2I. The chain is Small ubiquitin-related modifier 3 from Gallus gallus (Chicken).